Consider the following 463-residue polypeptide: L-seryl-tRNA(Sec) selenium transferase (463 aa).

Lys295 carries the N6-(pyridoxal phosphate)lysine modification.

Belongs to the SelA family. Homodecamer; pentamer of dimers. Binds only one seryl-tRNA(Sec) per dimer. Pyridoxal 5'-phosphate is required as a cofactor.

It localises to the cytoplasm. It carries out the reaction L-seryl-tRNA(Sec) + selenophosphate + H(+) = L-selenocysteinyl-tRNA(Sec) + phosphate. The protein operates within aminoacyl-tRNA biosynthesis; selenocysteinyl-tRNA(Sec) biosynthesis; selenocysteinyl-tRNA(Sec) from L-seryl-tRNA(Sec) (bacterial route): step 1/1. Converts seryl-tRNA(Sec) to selenocysteinyl-tRNA(Sec) required for selenoprotein biosynthesis. The chain is L-seryl-tRNA(Sec) selenium transferase from Escherichia coli O7:K1 (strain IAI39 / ExPEC).